The primary structure comprises 562 residues: Methionine--tRNA ligase, mitochondrial (562 aa).

Residues 1-10 (MLRSLALRTF) constitute a mitochondrion transit peptide. The short motif at 43–53 (FYVNAAPHLGH) is the 'HIGH' region element. A 'KMSKS' region motif is present at residues 332–336 (KMSKS). Residue lysine 335 coordinates ATP.

The protein belongs to the class-I aminoacyl-tRNA synthetase family.

The protein resides in the mitochondrion matrix. The catalysed reaction is tRNA(Met) + L-methionine + ATP = L-methionyl-tRNA(Met) + AMP + diphosphate. In Xenopus laevis (African clawed frog), this protein is Methionine--tRNA ligase, mitochondrial (mars2).